Consider the following 577-residue polypeptide: Multidrug transporter TPO1_2 (577 aa).

A disordered region spans residues M1–S63. N-linked (GlcNAc...) asparagine glycans are attached at residues N44 and N58. 12 consecutive transmembrane segments (helical) span residues V137 to F157, I167 to A187, G204 to K224, F234 to M254, A263 to S283, W293 to F313, P368 to L388, E406 to M426, L446 to T466, W475 to P495, Y504 to F526, and Y541 to L561.

It belongs to the major facilitator superfamily. DHA1 family. Polyamines/proton antiporter (TC 2.A.1.2.16) subfamily.

It localises to the cell membrane. Its function is as follows. Multidrug resistance transporter involved in resistance to azole antifungal drugs such as the imidazoles miconazole, ketoconazole, and tioconazole; as well as the triazoles itraconazole and fluconazole. Also plays a role in the resistance to other antifungal drug families such as the polyene amphotericin B, the pyrimide analog flucytosine, the fungicide mancozeb, and the polyamine spermine. Decreases the intracellular accumulation of clotrimazole by mediating its extrusion from cells. Plays a role in biofilm formation. The chain is Multidrug transporter TPO1_2 from Candida glabrata (strain ATCC 2001 / BCRC 20586 / JCM 3761 / NBRC 0622 / NRRL Y-65 / CBS 138) (Yeast).